Here is a 218-residue protein sequence, read N- to C-terminus: MMTFHPSPPQLTLIKSMLFIAALLPFGRLALFTLTDQLGANPIEFITRNTGDWTLYFLCMTLAITPLRRLSQWNWLIRLRRMLGLFAFFYACLHFTTFLWFDHFFDVNEMLKDVVKRPFITVGFSAFVLLIPLAITSTNGMVKRLGGKRWQWLHRLVYVIAALGILHYWWMKAGKHDFEQPIIFGTIVAVLLLVRVFWAWQKRSKNNALAGTSDCRTG.

5 helical membrane-spanning segments follow: residues 12–32, 82–102, 118–138, 150–170, and 180–200; these read TLIKSMLFIAALLPFGRLALF, MLGLFAFFYACLHFTTFLWFD, PFITVGFSAFVLLIPLAITST, WQWLHRLVYVIAALGILHYWW, and QPIIFGTIVAVLLLVRVFWAW.

Belongs to the MsrQ family. In terms of assembly, heterodimer of a catalytic subunit (MsrP) and a heme-binding subunit (MsrQ). It depends on FMN as a cofactor. Heme b serves as cofactor.

The protein localises to the cell inner membrane. Its function is as follows. Part of the MsrPQ system that repairs oxidized periplasmic proteins containing methionine sulfoxide residues (Met-O), using respiratory chain electrons. Thus protects these proteins from oxidative-stress damage caused by reactive species of oxygen and chlorine generated by the host defense mechanisms. MsrPQ is essential for the maintenance of envelope integrity under bleach stress, rescuing a wide series of structurally unrelated periplasmic proteins from methionine oxidation. MsrQ provides electrons for reduction to the reductase catalytic subunit MsrP, using the quinone pool of the respiratory chain. The sequence is that of Protein-methionine-sulfoxide reductase heme-binding subunit MsrQ from Herminiimonas arsenicoxydans.